Here is a 172-residue protein sequence, read N- to C-terminus: Low molecular mass early light-inducible protein HV90, chloroplastic (172 aa).

A chloroplast-targeting transit peptide spans 1 to 38 (MATMMSMSSFAGAAVVPRSSASSFGARSLPALGRRALV). Transmembrane regions (helical) follow at residues 106–126 (GQAWFAYTVAVLSMASLVPLL) and 150–170 (FAMLGLVALAATEIITGAPFI).

It belongs to the ELIP/psbS family.

Its subcellular location is the plastid. The protein resides in the chloroplast membrane. Probably involved in the integration of pigments into the mature pigment-protein complexes. This chain is Low molecular mass early light-inducible protein HV90, chloroplastic, found in Hordeum vulgare (Barley).